The sequence spans 402 residues: Multidrug resistance protein MdtH (402 aa).

Topologically, residues Met1–Lys12 are cytoplasmic. The chain crosses the membrane as a helical span at residues Tyr13–Ile33. The Periplasmic portion of the chain corresponds to Ser34–Glu98. A helical membrane pass occupies residues Pro99–Phe116. Residues Asp117–Ser138 lie on the Cytoplasmic side of the membrane. A helical membrane pass occupies residues Leu139–Leu159. The Periplasmic portion of the chain corresponds to Gln160 to Arg164. Residues Leu165–Leu185 form a helical membrane-spanning segment. Topologically, residues Pro186–Tyr213 are cytoplasmic. Residues Val214–Met234 form a helical membrane-spanning segment. Residues Val235–Ala243 lie on the Periplasmic side of the membrane. The helical transmembrane segment at Ala244 to Ala264 threads the bilayer. Residues Arg265–Arg276 are Cytoplasmic-facing. Residues Leu277–Leu297 form a helical membrane-spanning segment. Topologically, residues Gln298–Gln299 are periplasmic. A helical transmembrane segment spans residues Leu300–Thr320. The Cytoplasmic portion of the chain corresponds to Leu321–Arg339. The helical transmembrane segment at Leu340–Gly360 threads the bilayer. The Periplasmic portion of the chain corresponds to Lys361–Glu367. Residues Leu368–Phe388 form a helical membrane-spanning segment. Over Ser389 to Ala402 the chain is Cytoplasmic.

This sequence belongs to the major facilitator superfamily. DHA1 family. MdtH (TC 2.A.1.2.21) subfamily.

It localises to the cell inner membrane. This chain is Multidrug resistance protein MdtH, found in Salmonella typhi.